The following is a 561-amino-acid chain: Potassium-transporting ATPase potassium-binding subunit (561 aa).

Helical transmembrane passes span 5–25, 60–80, 86–106, 131–151, 177–197, 247–267, 281–301, 324–344, 376–396, 415–435, 488–508, and 537–557; these read LAAGLQVVFVLAVLAVAYVPV, YGYAGSVLGFSAASVLFLYAL, VLPLSGDLSGVSPAVAFNTAV, GLAVQNFVSAAVGMAVAVALI, ILLPFSFVIALILLSQGVIQS, PTPVSNIVEILAILLIPVSLT, LTLLAVMGILWGSLLAVTLAA, FGIPGTALFAVSTTGTSTGAV, GLYGILVLALIAVFVGGLLVG, ALSVLVMPALVLIGTGITVIL, ALGLCMLFGRFLPIIFVLALA, and GTVVLVAALTFFPALALGPIA.

This sequence belongs to the KdpA family. In terms of assembly, the system is composed of three essential subunits: KdpA, KdpB and KdpC.

The protein localises to the cell membrane. In terms of biological role, part of the high-affinity ATP-driven potassium transport (or Kdp) system, which catalyzes the hydrolysis of ATP coupled with the electrogenic transport of potassium into the cytoplasm. This subunit binds the extracellular potassium ions and delivers the ions to the membrane domain of KdpB through an intramembrane tunnel. In Rhodococcus opacus (strain B4), this protein is Potassium-transporting ATPase potassium-binding subunit.